Consider the following 150-residue polypeptide: Major facilitator superfamily domain-containing 14C pseudogene (150 aa).

The tract at residues methionine 1–lysine 25 is disordered. At methionine 1 to alanine 49 the chain is on the extracellular side. A helical membrane pass occupies residues isoleucine 50–leucine 70. Residues histidine 71 to asparagine 82 are Cytoplasmic-facing. A helical membrane pass occupies residues glycine 83–leucine 103. Topologically, residues serine 104–proline 111 are extracellular. A helical transmembrane segment spans residues phenylalanine 112–cysteine 132. Residues arginine 133 to alanine 150 lie on the Cytoplasmic side of the membrane.

Belongs to the major facilitator superfamily.

The protein resides in the membrane. The protein is Major facilitator superfamily domain-containing 14C pseudogene of Homo sapiens (Human).